The following is a 229-amino-acid chain: Ribonuclease 3 (229 aa).

The RNase III domain maps to Leu5–Gly127. Mg(2+) is bound at residue Glu40. Asp44 is an active-site residue. Mg(2+) contacts are provided by Asp113 and Glu116. Residue Glu116 is part of the active site. Positions Asp154–Val224 constitute a DRBM domain.

This sequence belongs to the ribonuclease III family. Homodimer. The cofactor is Mg(2+).

It localises to the cytoplasm. The catalysed reaction is Endonucleolytic cleavage to 5'-phosphomonoester.. Its function is as follows. Digests double-stranded RNA. Involved in the processing of primary rRNA transcript to yield the immediate precursors to the large and small rRNAs (23S and 16S). Processes some mRNAs, and tRNAs when they are encoded in the rRNA operon. Processes pre-crRNA and tracrRNA of type II CRISPR loci if present in the organism. The polypeptide is Ribonuclease 3 (Pseudomonas syringae pv. syringae (strain B728a)).